Consider the following 461-residue polypeptide: Glutamate-gated chloride channel alpha (461 aa).

An N-terminal signal peptide occupies residues M1–A20. Residues Q21–S275 are Extracellular-facing. L-glutamate-binding residues include R98, R117, and S182. C191 and C205 are oxidised to a cystine. An L-glutamate-binding site is contributed by S211. N-linked (GlcNAc...) asparagine glycosylation occurs at N246. C252 and C263 form a disulfide bridge. Residues F276–F298 traverse the membrane as a helical segment. Residues D299–I303 are Cytoplasmic-facing. A helical membrane pass occupies residues P304–N325. Over S326–S332 the chain is Extracellular. A helical membrane pass occupies residues Y333–L353. Topologically, residues E354–D432 are cytoplasmic. The chain crosses the membrane as a helical span at residues L433–F454. The Extracellular portion of the chain corresponds to G455–F461.

The protein belongs to the ligand-gated ion channel (TC 1.A.9) family. Glutamate-gated chloride channel (TC 1.A.9.4) subfamily. In terms of assembly, pentamer. Homooligomer, forms functional heterooligomers with glc-2.

The protein resides in the postsynaptic cell membrane. It localises to the cell membrane. In terms of biological role, glutamate-gated chloride channel subunit; channel properties depend on the subunit composition. Glutamate binding triggers a rapidly reversible current in heteromeric channels formed by glc-1 and glc-2, while the anti-helmintic drug ivermectin and other avermectins trigger a permanently open channel configuration. Channels containing only glc-1 are activated by ivermectin, but not by glutamate alone (in vitro). The heteromeric channel formed by glc-1 and glc-2 is also activated by ibotenate, and it is blocked by picrotoxin and flufenamic acid. Plays a role in the regulation of locomotor behavior. This is Glutamate-gated chloride channel alpha from Caenorhabditis elegans.